A 521-amino-acid polypeptide reads, in one-letter code: MAASIGALKSSPSSNNCINERRNDSTRAVSSRNLSFSSSHLAGDKLMPVSSLRSQGVRFNVRRSPMIVSPKAVSDSQNSQTCLDPDASRSVLGIILGGGAGTRLYPLTKKRAKPAVPLGANYRLIDIPVSNCLNSNISKIYVLTQFNSASLNRHLSRAYASNMGGYKNEGFVEVLAAQQSPENPDWFQGTADAVRQYLWLFEEHTVLEYLILAGDHLYRMDYEKFIQAHRETDADITVAALPMDEKRATAFGLMKIDEEGRIIEFAEKPQGEQLQAMKVDTTILGLDDKRAKEMPFIASMGIYVISKDVMLNLLRDKFPGANDFGSEVIPGATSLGMRVQAYLYDGYWEDIGTIEAFYNANLGITKKPVPDFSFYDRSAPIYTQPRYLPPSKMLDADVTDSVIGEGCVIKNCKIHHSVVGLRSCISEGAIIEDSLLMGADYYETDADRKLLAAKGSVPIGIGKNCHIKRAIIDKNARIGDNVKIINKDNVQEAARETDGYFIKSGIVTVIKDALIPSGIII.

The interval 1–32 is disordered; sequence MAASIGALKSSPSSNNCINERRNDSTRAVSSR. Residues 1 to 72 constitute a chloroplast transit peptide; that stretch reads MAASIGALKS…RSPMIVSPKA (72 aa). Lys-268 is a substrate binding site. An allosteric regulation region spans residues 444–454; sequence TDADRKLLAAK.

This sequence belongs to the bacterial/plant glucose-1-phosphate adenylyltransferase family. As to quaternary structure, heterotetramer. Leaves and tubers.

Its subcellular location is the plastid. The protein localises to the chloroplast. It is found in the amyloplast. It catalyses the reaction alpha-D-glucose 1-phosphate + ATP + H(+) = ADP-alpha-D-glucose + diphosphate. Its pathway is glycan biosynthesis; starch biosynthesis. Activated by 3'phosphoglycerate, inhibited by orthophosphate. Allosteric regulation. Its function is as follows. This protein plays a role in synthesis of starch. It catalyzes the synthesis of the activated glycosyl donor, ADP-glucose from Glc-1-P and ATP. The polypeptide is Glucose-1-phosphate adenylyltransferase small subunit, chloroplastic/amyloplastic (Solanum tuberosum (Potato)).